Here is a 503-residue protein sequence, read N- to C-terminus: Probable cytosol aminopeptidase (503 aa).

Mn(2+) is bound by residues K270 and D275. K282 is an active-site residue. Mn(2+) is bound by residues D293, D352, and E354. The active site involves R356.

Belongs to the peptidase M17 family. Mn(2+) is required as a cofactor.

The protein localises to the cytoplasm. It catalyses the reaction Release of an N-terminal amino acid, Xaa-|-Yaa-, in which Xaa is preferably Leu, but may be other amino acids including Pro although not Arg or Lys, and Yaa may be Pro. Amino acid amides and methyl esters are also readily hydrolyzed, but rates on arylamides are exceedingly low.. The catalysed reaction is Release of an N-terminal amino acid, preferentially leucine, but not glutamic or aspartic acids.. Its function is as follows. Presumably involved in the processing and regular turnover of intracellular proteins. Catalyzes the removal of unsubstituted N-terminal amino acids from various peptides. The sequence is that of Probable cytosol aminopeptidase from Serratia proteamaculans (strain 568).